A 201-amino-acid polypeptide reads, in one-letter code: Holliday junction branch migration complex subunit RuvA (201 aa).

The domain I stretch occupies residues 1 to 63 (MIEYVRGELA…EDAYVLYGFA (63 aa)). Positions 64–142 (DKQEREIFLL…TMGATVAGGS (79 aa)) are domain II. Positions 143-151 (ASAGMLLQS) are flexible linker. The interval 152 to 201 (ASVEVQEEAVAALTMLGFAAAPSQKVVLAILKEEPDAPVEKVIKLALKRL) is domain III.

Belongs to the RuvA family. Homotetramer. Forms an RuvA(8)-RuvB(12)-Holliday junction (HJ) complex. HJ DNA is sandwiched between 2 RuvA tetramers; dsDNA enters through RuvA and exits via RuvB. An RuvB hexamer assembles on each DNA strand where it exits the tetramer. Each RuvB hexamer is contacted by two RuvA subunits (via domain III) on 2 adjacent RuvB subunits; this complex drives branch migration. In the full resolvosome a probable DNA-RuvA(4)-RuvB(12)-RuvC(2) complex forms which resolves the HJ.

The protein resides in the cytoplasm. Its function is as follows. The RuvA-RuvB-RuvC complex processes Holliday junction (HJ) DNA during genetic recombination and DNA repair, while the RuvA-RuvB complex plays an important role in the rescue of blocked DNA replication forks via replication fork reversal (RFR). RuvA specifically binds to HJ cruciform DNA, conferring on it an open structure. The RuvB hexamer acts as an ATP-dependent pump, pulling dsDNA into and through the RuvAB complex. HJ branch migration allows RuvC to scan DNA until it finds its consensus sequence, where it cleaves and resolves the cruciform DNA. This is Holliday junction branch migration complex subunit RuvA from Bacteroides thetaiotaomicron (strain ATCC 29148 / DSM 2079 / JCM 5827 / CCUG 10774 / NCTC 10582 / VPI-5482 / E50).